The following is a 112-amino-acid chain: Nitrogen regulatory protein P-II (112 aa).

Tyr51 is subject to O-UMP-tyrosine.

This sequence belongs to the P(II) protein family. As to quaternary structure, homotrimer.

Functionally, in nitrogen-limiting conditions, when the ratio of Gln to 2-ketoglutarate decreases, P-II is uridylylated to P-II-UMP. P-II-UMP allows the deadenylation of glutamine synthetase (GS), thus activating the enzyme. Conversely, in nitrogen excess P-II is deuridylated and promotes the adenylation of GS. P-II indirectly controls the transcription of the GS gene (glnA). P-II prevents NR-II-catalyzed conversion of NR-I to NR-I-phosphate, the transcriptional activator of glnA. When P-II is uridylylated to P-II-UMP, these events are reversed. This Mesorhizobium japonicum (strain LMG 29417 / CECT 9101 / MAFF 303099) (Mesorhizobium loti (strain MAFF 303099)) protein is Nitrogen regulatory protein P-II (glnB).